The sequence spans 335 residues: Homeobox protein Hox-A1 (335 aa).

Positions 61–80 (IGSPHHHHHHHHRHPQPATY) are disordered. The segment covering 64 to 75 (PHHHHHHHHRHP) has biased composition (basic residues). Positions 75–203 (PQPATYQTSG…PASETSSPAQ (129 aa)) are interaction with OGT. Residues 204 to 209 (TFDWMK) carry the Antp-type hexapeptide motif. A DNA-binding region (homeobox) is located at residues 229–288 (PNAVRTNFTTKQLTELEKEFHFNKYLTRARRVEIAASLQLNETQVKIWFQNRRMKQKKRE). A disordered region spans residues 281–335 (RMKQKKREKEGLLPISPATPPGNDEKAEESSEKSSSSPCVPSPGSSTSDTLTTSH). Basic and acidic residues predominate over residues 303 to 312 (NDEKAEESSE). Residues 313–328 (KSSSSPCVPSPGSSTS) show a composition bias toward low complexity.

This sequence belongs to the Antp homeobox family. Labial subfamily. As to quaternary structure, interacts with OGT (via TPR repeats domain); the interaction takes place mainly in the nucleus. Forms a DNA-binding heterodimer with transcription factor PBX1.

It localises to the nucleus. Its function is as follows. Sequence-specific transcription factor. Regulates multiple developmental processes including brainstem, inner and outer ear, abducens nerve and cardiovascular development and morphogenesis as well as cognition and behavior. Also part of a developmental regulatory system that provides cells with specific positional identities on the anterior-posterior axis. Acts on the anterior body structures. Seems to act in the maintenance and/or generation of hindbrain segments. Activates transcription in the presence of PBX1A and PKNOX1. This chain is Homeobox protein Hox-A1 (HOXA1), found in Homo sapiens (Human).